We begin with the raw amino-acid sequence, 22 residues long: thr operon leader peptide (22 aa).

It belongs to the thr operon leader peptide family.

In terms of biological role, this protein is involved in control of the biosynthesis of threonine. This chain is thr operon leader peptide, found in Klebsiella pneumoniae (strain 342).